The sequence spans 386 residues: Enoyl-[acyl-carrier-protein] reductase 1, mitochondrial (386 aa).

A mitochondrion-targeting transit peptide spans M1 to T22. Catalysis depends on Y79, which acts as the Proton donor. NADP(+) is bound by residues N172, T199 to V202, R222 to R224, Y296 to M299, F321 to V323, and K381.

This sequence belongs to the zinc-containing alcohol dehydrogenase family. Quinone oxidoreductase subfamily. In terms of assembly, homodimer and heterodimer with ETR2.

The protein localises to the mitochondrion. It carries out the reaction a 2,3-saturated acyl-[ACP] + NADP(+) = a (2E)-enoyl-[ACP] + NADPH + H(+). The enzyme catalyses (2E,4E)-hexadienoyl-CoA + NADPH + H(+) = (4E)-hexenoyl-CoA + NADP(+). It catalyses the reaction (2E)-hexenoyl-CoA + NADPH + H(+) = hexanoyl-CoA + NADP(+). Its function is as follows. Catalyzes the NADPH-dependent reduction of trans-2-enoyl thioesters in mitochondrial fatty acid synthesis (fatty acid synthesis type II). Fatty acid chain elongation in mitochondria uses acyl carrier protein (ACP) as an acyl group carrier, but the enzyme accepts both ACP and CoA thioesters as substrates in vitro. Required for respiration and the maintenance of the mitochondrial compartment. This Candida tropicalis (Yeast) protein is Enoyl-[acyl-carrier-protein] reductase 1, mitochondrial (ETR1).